We begin with the raw amino-acid sequence, 169 residues long: Large ribosomal subunit protein uL10 (169 aa).

This sequence belongs to the universal ribosomal protein uL10 family. In terms of assembly, part of the ribosomal stalk of the 50S ribosomal subunit. The N-terminus interacts with L11 and the large rRNA to form the base of the stalk. The C-terminus forms an elongated spine to which L12 dimers bind in a sequential fashion forming a multimeric L10(L12)X complex.

In terms of biological role, forms part of the ribosomal stalk, playing a central role in the interaction of the ribosome with GTP-bound translation factors. The sequence is that of Large ribosomal subunit protein uL10 from Rickettsia bellii (strain OSU 85-389).